A 119-amino-acid chain; its full sequence is MSRSVALAVLALLSLSGLEAIQRTPKIQVYSRHPPENGKPNFLNCYVSGFHPSDIEVDLLKNGEKMGKVEHSDLSFSKDWSFYLLYYTEFTPNEKDEYACRVNHVTLSGPRTVKWDRDM.

The first 20 residues, 1–20, serve as a signal peptide directing secretion; the sequence is MSRSVALAVLALLSLSGLEA. The Ig-like C1-type domain maps to 25–114; sequence PKIQVYSRHP…VTLSGPRTVK (90 aa). Cysteines 45 and 100 form a disulfide.

The protein belongs to the beta-2-microglobulin family. Heterodimer of an alpha chain and a beta chain. Beta-2-microglobulin is the beta-chain of major histocompatibility complex class I molecules.

The protein resides in the secreted. Its function is as follows. Component of the class I major histocompatibility complex (MHC). Involved in the presentation of peptide antigens to the immune system. This Papio anubis (Olive baboon) protein is Beta-2-microglobulin (B2M).